The following is a 332-amino-acid chain: 2-hydroxyacid dehydrogenase homolog 2 (332 aa).

Residues 154-155 (KI), 233-235 (TSR), and aspartate 259 each bind NAD(+). The active site involves arginine 235. Glutamate 264 is an active-site residue. Residue histidine 296 is the Proton donor of the active site. 296 to 299 (HQAF) provides a ligand contact to NAD(+).

This sequence belongs to the D-isomer specific 2-hydroxyacid dehydrogenase family.

Its subcellular location is the cytoplasm. The protein localises to the nucleus. This is 2-hydroxyacid dehydrogenase homolog 2 from Schizosaccharomyces pombe (strain 972 / ATCC 24843) (Fission yeast).